The following is a 498-amino-acid chain: Ammonium transporter 1 member 3 (498 aa).

The next 11 membrane-spanning stretches (helical) occupy residues 41 to 61 (LLFS…LCAG), 76 to 96 (VLDA…FAFG), 122 to 142 (FFLF…GSIA), 150 to 170 (YLIY…HWFW), 194 to 214 (FAGS…GAFI), 238 to 258 (LVVL…PGSF), 277 to 299 (AVGR…TLYG), 307 to 327 (WNVT…TAGC), 329 to 349 (VVDP…LIGC), 362 to 382 (LEAT…TALF), and 414 to 434 (IVQI…LFYV). A disordered region spans residues 473–498 (RAKSAAETARVEPRKSPEQAAAGQFV).

This sequence belongs to the ammonia transporter channel (TC 1.A.11.2) family. As to expression, expressed in roots.

The protein localises to the membrane. Ammonium transporter probably involved in ammonium uptake from the soil. The protein is Ammonium transporter 1 member 3 (AMT1-3) of Oryza sativa subsp. japonica (Rice).